Here is a 500-residue protein sequence, read N- to C-terminus: MSGSMAQAFAHNFLGHSPRWYKACIVGFLMLNALVLWSVGPVAAGWLLVIEFIFTLAMALKCYPLMPGGLLLIEALLLKMTTPQALYEELQHNFPVILLLMFMVAGIYFMKDLLLFLFSRLLLGVRSKALLALMFCFLSAFLSAFLDALTVTAVIISAAVGFYSVYHRVASGNDPRQDSEFSDDQHLPQLHHEDLEQFRAFLRSLLMHGAVGTALGGVCTLVGEPQNLLIGHEMGWHFAEFFLKVAPVSLPVLVAGLVTCLLLEKLRWFGYGTLLPDNVRAVLANYAAEDNAERTPRQRAALLVQGCAALILIAGLAFHIAEVGLIGLMVIVLITAFTGITDEHRLGSAFKDAMPFTALLVVFFAVVAVIHDQQLFAPLIQWVLALPADQQPGMLFIANGLLSAISDNVFVATIYITEVKQAFLSGHMSREHFETLAIAINTGTNLPSVATPNGQAAFLFLLTSAIAPLVRLSYGRMVWMALPYTVVMGLLGWYAVSYWL.

Helical transmembrane passes span 28–50 (FLML…LLVI), 58–78 (MALK…ALLL), 96–116 (VILL…LLLF), 129–149 (ALLA…LDAL), 150–170 (TVTA…HRVA), 205–225 (LLMH…VGEP), 241–261 (FFLK…VTCL), 311–331 (ILIA…LMVI), 350–370 (FKDA…VAVI), 394–414 (MLFI…VATI), 449–469 (VATP…IAPL), and 477–497 (MVWM…YAVS).

Belongs to the NhaB Na(+)/H(+) (TC 2.A.34) antiporter family.

It localises to the cell inner membrane. The catalysed reaction is 2 Na(+)(in) + 3 H(+)(out) = 2 Na(+)(out) + 3 H(+)(in). In terms of biological role, na(+)/H(+) antiporter that extrudes sodium in exchange for external protons. This chain is Na(+)/H(+) antiporter NhaB, found in Pseudomonas fluorescens (strain Pf0-1).